A 245-amino-acid polypeptide reads, in one-letter code: tRNA (guanine-N(1)-)-methyltransferase (245 aa).

S-adenosyl-L-methionine-binding positions include Gly113 and Ile133–Leu138.

This sequence belongs to the RNA methyltransferase TrmD family. As to quaternary structure, homodimer.

The protein resides in the cytoplasm. The enzyme catalyses guanosine(37) in tRNA + S-adenosyl-L-methionine = N(1)-methylguanosine(37) in tRNA + S-adenosyl-L-homocysteine + H(+). Its function is as follows. Specifically methylates guanosine-37 in various tRNAs. This is tRNA (guanine-N(1)-)-methyltransferase from Anoxybacillus flavithermus (strain DSM 21510 / WK1).